Reading from the N-terminus, the 432-residue chain is Short/branched chain specific acyl-CoA dehydrogenase, mitochondrial (432 aa).

The transit peptide at 1–33 (MERATVRLLRGGALLRRNFPSCLSSWKTPPHAL) directs the protein to the mitochondrion. At lysine 70 the chain carries N6-acetyllysine; alternate. Lysine 70 carries the post-translational modification N6-succinyllysine; alternate. Residues 174–183 (ICISETGAGS) and 207–209 (WIS) each bind FAD. Residue serine 183 coordinates substrate. Serine 183 bears the Phosphoserine mark. Substrate is bound by residues tyrosine 229 and tyrosine 283. The residue at position 284 (lysine 284) is an N6-acetyllysine; alternate. Lysine 284 carries the post-translational modification N6-succinyllysine; alternate. Residue 291-294 (NEGR) coordinates substrate. FAD contacts are provided by residues arginine 319, glutamine 330, and 387 to 391 (EWMGG). Glutamate 414 (proton acceptor) is an active-site residue. FAD is bound at residue 416 to 418 (TSN). At lysine 426 the chain carries N6-acetyllysine.

This sequence belongs to the acyl-CoA dehydrogenase family. In terms of assembly, homotetramer. It depends on FAD as a cofactor.

The protein resides in the mitochondrion matrix. It catalyses the reaction 2-methylbutanoyl-CoA + oxidized [electron-transfer flavoprotein] + H(+) = (2E)-2-methylbut-2-enoyl-CoA + reduced [electron-transfer flavoprotein]. The enzyme catalyses (2S)-2-methylbutanoyl-CoA + oxidized [electron-transfer flavoprotein] + H(+) = (2E)-2-methylbut-2-enoyl-CoA + reduced [electron-transfer flavoprotein]. The catalysed reaction is (2R)-2-methylbutanoyl-CoA + oxidized [electron-transfer flavoprotein] + H(+) = ethylacryloyl-CoA + reduced [electron-transfer flavoprotein]. It carries out the reaction butanoyl-CoA + oxidized [electron-transfer flavoprotein] + H(+) = (2E)-butenoyl-CoA + reduced [electron-transfer flavoprotein]. It catalyses the reaction 2-methylpropanoyl-CoA + oxidized [electron-transfer flavoprotein] + H(+) = 2-methylpropenoyl-CoA + reduced [electron-transfer flavoprotein]. The enzyme catalyses hexanoyl-CoA + oxidized [electron-transfer flavoprotein] + H(+) = (2E)-hexenoyl-CoA + reduced [electron-transfer flavoprotein]. The catalysed reaction is valproyl-CoA + oxidized [electron-transfer flavoprotein] + H(+) = (2E)-2-propylpent-2-enoyl-CoA + reduced [electron-transfer flavoprotein]. The protein operates within lipid metabolism; mitochondrial fatty acid beta-oxidation. It functions in the pathway amino-acid degradation; L-isoleucine degradation. Functionally, short and branched chain specific acyl-CoA dehydrogenase that catalyzes the removal of one hydrogen from C-2 and C-3 of the fatty acyl-CoA thioester, resulting in the formation of trans-2-enoyl-CoA. Among the different mitochondrial acyl-CoA dehydrogenases, acts specifically on short and branched chain acyl-CoA derivatives such as (S)-2-methylbutyryl-CoA as well as short straight chain acyl-CoAs such as butyryl-CoA. Plays an important role in the metabolism of L-isoleucine by catalyzing the dehydrogenation of 2-methylbutyryl-CoA, one of the steps of the L-isoleucine catabolic pathway. Can also act on valproyl-CoA, a metabolite of the valproic acid drug. The sequence is that of Short/branched chain specific acyl-CoA dehydrogenase, mitochondrial (ACADSB) from Bos taurus (Bovine).